A 212-amino-acid polypeptide reads, in one-letter code: Peptide methionine sulfoxide reductase MsrA (212 aa).

Cys-52 is an active-site residue.

This sequence belongs to the MsrA Met sulfoxide reductase family.

The catalysed reaction is L-methionyl-[protein] + [thioredoxin]-disulfide + H2O = L-methionyl-(S)-S-oxide-[protein] + [thioredoxin]-dithiol. It carries out the reaction [thioredoxin]-disulfide + L-methionine + H2O = L-methionine (S)-S-oxide + [thioredoxin]-dithiol. In terms of biological role, has an important function as a repair enzyme for proteins that have been inactivated by oxidation. Catalyzes the reversible oxidation-reduction of methionine sulfoxide in proteins to methionine. The protein is Peptide methionine sulfoxide reductase MsrA of Shigella boydii serotype 4 (strain Sb227).